The following is a 137-amino-acid chain: Large ribosomal subunit protein uL16 (137 aa).

The protein belongs to the universal ribosomal protein uL16 family. In terms of assembly, part of the 50S ribosomal subunit.

Functionally, binds 23S rRNA and is also seen to make contacts with the A and possibly P site tRNAs. The polypeptide is Large ribosomal subunit protein uL16 (Cereibacter sphaeroides (strain ATCC 17025 / ATH 2.4.3) (Rhodobacter sphaeroides)).